A 263-amino-acid chain; its full sequence is 3-methyl-2-oxobutanoate hydroxymethyltransferase (263 aa).

D45 and D84 together coordinate Mg(2+). 3-methyl-2-oxobutanoate is bound by residues 45-46 (DS), D84, and K112. E114 serves as a coordination point for Mg(2+). E180 (proton acceptor) is an active-site residue.

It belongs to the PanB family. As to quaternary structure, homodecamer; pentamer of dimers. Mg(2+) serves as cofactor.

It localises to the cytoplasm. The catalysed reaction is 3-methyl-2-oxobutanoate + (6R)-5,10-methylene-5,6,7,8-tetrahydrofolate + H2O = 2-dehydropantoate + (6S)-5,6,7,8-tetrahydrofolate. The protein operates within cofactor biosynthesis; (R)-pantothenate biosynthesis; (R)-pantoate from 3-methyl-2-oxobutanoate: step 1/2. Its function is as follows. Catalyzes the reversible reaction in which hydroxymethyl group from 5,10-methylenetetrahydrofolate is transferred onto alpha-ketoisovalerate to form ketopantoate. This Salmonella enteritidis PT4 (strain P125109) protein is 3-methyl-2-oxobutanoate hydroxymethyltransferase.